A 202-amino-acid chain; its full sequence is Guanylyl cyclase-activating protein 1 (202 aa).

Glycine 2 carries the N-myristoyl glycine lipid modification. Deamidated asparagine is present on asparagine 3. EF-hand domains lie at 31 to 49 (SGQL…KNLS), 51 to 86 (SASQ…VLKG), 87 to 122 (KVEQ…IRTI), and 131 to 166 (SAEE…DQML). Ca(2+) is bound by residues aspartate 64, asparagine 66, aspartate 68, tyrosine 70, glutamate 75, aspartate 100, aspartate 102, asparagine 104, cysteine 106, glutamate 111, aspartate 144, asparagine 146, aspartate 148, glutamate 150, and glutamate 155.

In terms of assembly, homodimer. In the retina, expressed in rod photoreceptors (at protein level). Expressed in cone photoreceptors.

The protein localises to the membrane. It is found in the photoreceptor inner segment. It localises to the cell projection. Its subcellular location is the cilium. The protein resides in the photoreceptor outer segment. In terms of biological role, stimulates retinal guanylyl cyclase when free calcium ions concentration is low and inhibits guanylyl cyclase when free calcium ions concentration is elevated. This Ca(2+)-sensitive regulation of retinal guanylyl cyclase is a key event in recovery of the dark state of rod photoreceptors following light exposure. May be involved in cone photoreceptor light response and recovery of response in bright light. This chain is Guanylyl cyclase-activating protein 1 (Guca1a), found in Mus musculus (Mouse).